A 788-amino-acid chain; its full sequence is Phosphoribosylformylglycinamidine synthase subunit PurL (788 aa).

Residue histidine 50 is part of the active site. Residues tyrosine 53 and lysine 92 each contribute to the ATP site. Glutamate 94 is a binding site for Mg(2+). Residues 95–98 and arginine 117 each bind substrate; that span reads SHNH. The active-site Proton acceptor is the histidine 96. Aspartate 118 is a Mg(2+) binding site. Position 241 (glutamine 241) interacts with substrate. Aspartate 269 is a Mg(2+) binding site. 313–315 is a substrate binding site; that stretch reads ESQ. 2 residues coordinate ATP: aspartate 524 and glycine 561. Asparagine 562 is a Mg(2+) binding site. Residue serine 564 coordinates substrate.

This sequence belongs to the FGAMS family. In terms of assembly, monomer. Part of the FGAM synthase complex composed of 1 PurL, 1 PurQ and 2 PurS subunits.

Its subcellular location is the cytoplasm. It catalyses the reaction N(2)-formyl-N(1)-(5-phospho-beta-D-ribosyl)glycinamide + L-glutamine + ATP + H2O = 2-formamido-N(1)-(5-O-phospho-beta-D-ribosyl)acetamidine + L-glutamate + ADP + phosphate + H(+). It functions in the pathway purine metabolism; IMP biosynthesis via de novo pathway; 5-amino-1-(5-phospho-D-ribosyl)imidazole from N(2)-formyl-N(1)-(5-phospho-D-ribosyl)glycinamide: step 1/2. Part of the phosphoribosylformylglycinamidine synthase complex involved in the purines biosynthetic pathway. Catalyzes the ATP-dependent conversion of formylglycinamide ribonucleotide (FGAR) and glutamine to yield formylglycinamidine ribonucleotide (FGAM) and glutamate. The FGAM synthase complex is composed of three subunits. PurQ produces an ammonia molecule by converting glutamine to glutamate. PurL transfers the ammonia molecule to FGAR to form FGAM in an ATP-dependent manner. PurS interacts with PurQ and PurL and is thought to assist in the transfer of the ammonia molecule from PurQ to PurL. In Nostoc punctiforme (strain ATCC 29133 / PCC 73102), this protein is Phosphoribosylformylglycinamidine synthase subunit PurL.